The primary structure comprises 221 residues: Secreted protein BARF1 (221 aa).

A signal peptide spans Met-1–Ala-20. Ig-like domains lie at Val-21 to Ser-120 and Pro-124 to Ser-220. Asn-95 is a glycosylation site (N-linked (GlcNAc...) asparagine; by host). Cys-146 and Cys-201 are oxidised to a cystine.

Homohexamer. Interacts with human CSF1. Post-translationally, phosphorylated on serine and threonine by host.

Its subcellular location is the secreted. In terms of biological role, plays diverse functions in immunomodulation and oncogenicity, maybe by acting as a functional receptor for human CSF1. May inhibit interferon secretion from mononuclear cells. Exhibits oncogenic activity in vitro. The sequence is that of Secreted protein BARF1 from Epstein-Barr virus (strain B95-8) (HHV-4).